The chain runs to 860 residues: Alanine--tRNA ligase (860 aa).

Residues His553, His557, Cys655, and His659 each coordinate Zn(2+).

It belongs to the class-II aminoacyl-tRNA synthetase family. Zn(2+) serves as cofactor.

The protein localises to the cytoplasm. It catalyses the reaction tRNA(Ala) + L-alanine + ATP = L-alanyl-tRNA(Ala) + AMP + diphosphate. In terms of biological role, catalyzes the attachment of alanine to tRNA(Ala) in a two-step reaction: alanine is first activated by ATP to form Ala-AMP and then transferred to the acceptor end of tRNA(Ala). Also edits incorrectly charged Ser-tRNA(Ala) and Gly-tRNA(Ala) via its editing domain. This is Alanine--tRNA ligase from Legionella pneumophila (strain Corby).